We begin with the raw amino-acid sequence, 574 residues long: Proline--tRNA ligase (574 aa).

Belongs to the class-II aminoacyl-tRNA synthetase family. ProS type 1 subfamily. In terms of assembly, homodimer.

It localises to the cytoplasm. The enzyme catalyses tRNA(Pro) + L-proline + ATP = L-prolyl-tRNA(Pro) + AMP + diphosphate. Catalyzes the attachment of proline to tRNA(Pro) in a two-step reaction: proline is first activated by ATP to form Pro-AMP and then transferred to the acceptor end of tRNA(Pro). As ProRS can inadvertently accommodate and process non-cognate amino acids such as alanine and cysteine, to avoid such errors it has two additional distinct editing activities against alanine. One activity is designated as 'pretransfer' editing and involves the tRNA(Pro)-independent hydrolysis of activated Ala-AMP. The other activity is designated 'posttransfer' editing and involves deacylation of mischarged Ala-tRNA(Pro). The misacylated Cys-tRNA(Pro) is not edited by ProRS. The chain is Proline--tRNA ligase from Desulfovibrio desulfuricans (strain ATCC 27774 / DSM 6949 / MB).